The following is a 312-amino-acid chain: Acetyl-coenzyme A carboxylase carboxyl transferase subunit beta (312 aa).

The region spanning 24–293 (LWIKCPDSGQ…VEHAKPAPQL (270 aa)) is the CoA carboxyltransferase N-terminal domain. Residues 286-312 (HAKPAPQLPPPAKPAETAEAPAVATSA) form a disordered region. A compositionally biased stretch (low complexity) spans 299-312 (PAETAEAPAVATSA).

The protein belongs to the AccD/PCCB family. Acetyl-CoA carboxylase is a heterohexamer composed of biotin carboxyl carrier protein (AccB), biotin carboxylase (AccC) and two subunits each of ACCase subunit alpha (AccA) and ACCase subunit beta (AccD).

Its subcellular location is the cytoplasm. It carries out the reaction N(6)-carboxybiotinyl-L-lysyl-[protein] + acetyl-CoA = N(6)-biotinyl-L-lysyl-[protein] + malonyl-CoA. It participates in lipid metabolism; malonyl-CoA biosynthesis; malonyl-CoA from acetyl-CoA: step 1/1. Functionally, component of the acetyl coenzyme A carboxylase (ACC) complex. Biotin carboxylase (BC) catalyzes the carboxylation of biotin on its carrier protein (BCCP) and then the CO(2) group is transferred by the transcarboxylase to acetyl-CoA to form malonyl-CoA. The polypeptide is Acetyl-coenzyme A carboxylase carboxyl transferase subunit beta (Bradyrhizobium sp. (strain ORS 278)).